Consider the following 202-residue polypeptide: Transcription factor MUTE (202 aa).

In terms of domain architecture, bHLH spans 1 to 49 (MSHIAVERNRRRQMNEHLKSLRSLTPCFYIKRGDQASIIGGVIEFIKEL).

Homodimer. Leaf epidermis and flowers.

The protein localises to the nucleus. Transcription factor. Together with FMA and SPCH, regulates the stomata formation. Required for the differentiation of stomatal guard cells, by promoting successive asymmetric cell divisions and the formation of guard mother cells. Promotes the conversion of the leaf epidermis into stomata. The protein is Transcription factor MUTE (MUTE) of Arabidopsis thaliana (Mouse-ear cress).